Here is a 310-residue protein sequence, read N- to C-terminus: Glutaminase (310 aa).

Substrate-binding residues include Ser67, Asn118, Glu161, Asn168, Tyr192, Tyr244, and Val262.

It belongs to the glutaminase family. In terms of assembly, homotetramer.

It catalyses the reaction L-glutamine + H2O = L-glutamate + NH4(+). The polypeptide is Glutaminase (Legionella pneumophila (strain Paris)).